We begin with the raw amino-acid sequence, 94 residues long: Protein SpdA (94 aa).

Residues 41-68 traverse the membrane as a helical segment; it reads GPILLALVAAGGSVGVVMTLCLLLQTAA.

It localises to the cell membrane. Involved in plasmid transfer. The protein is Protein SpdA (spdA) of Streptomyces lividans.